We begin with the raw amino-acid sequence, 697 residues long: Probable translocation protein y4yR (697 aa).

8 helical membrane passes run 20–40 (VALM…VMAV), 42–62 (ALIG…LYVS), 67–87 (FSSL…LTVA), 107–127 (SFVI…VTMV), 200–220 (SIAG…IGLL), 235–255 (LLTI…SITA), 293–313 (VAMG…AAVF), and 372–392 (IARI…PIPV). Residues 675-697 (IRLPPSNGTSGEPRSIRPSATTG) form a disordered region. Residues 680 to 697 (SNGTSGEPRSIRPSATTG) show a composition bias toward polar residues.

This sequence belongs to the FHIPEP (flagella/HR/invasion proteins export pore) family.

It localises to the cell inner membrane. Its function is as follows. Could be involved in the secretion of an unknown factor. The polypeptide is Probable translocation protein y4yR (Sinorhizobium fredii (strain NBRC 101917 / NGR234)).